A 202-amino-acid chain; its full sequence is Recoverin (202 aa).

The N-myristoyl glycine moiety is linked to residue glycine 2. Residue cysteine 39 is modified to Cysteine sulfenic acid (-SOH). EF-hand domains lie at 41 to 59 (SGRI…FFPD), 61 to 96 (DPKA…TTAG), 97 to 132 (KPTQ…IFKM), and 147 to 182 (TPEK…NKEI). 10 residues coordinate Ca(2+): aspartate 74, asparagine 76, aspartate 78, threonine 80, glutamate 85, aspartate 110, aspartate 112, asparagine 114, threonine 116, and glutamate 121. The interval 189 to 192 (EPQK) is interaction with GRK1.

This sequence belongs to the recoverin family. As to quaternary structure, homodimer; disulfide-linked. Homodimerization is caused by prolonged intense illumination. May form a complex composed of RHO, GRK1 and RCVRN in a Ca(2+)-dependent manner; RCVRN prevents the interaction between GRK1 and RHO. Interacts (via C-terminus) with GRK1 (via N-terminus); the interaction is Ca(2+)-dependent. The N-terminal glycine is linked to one of four different types of acyl groups. The most abundant is myristoleate (14:1), but 14:0, 14:2, and 12:0 acyl residues are also present. The Ca(2+) induced exposure of the myristoyl group, known as the calcium-myristoyl switch, promotes RCVRN binding to the photoreceptor cell membranes only when intracellular Ca(2+) concentration is high. Post-translationally, oxidation on Cys-39 occurs in response to prolonged intense illumination and results in the formation of disulfide homodimers, and to a lesser extent disulfide-linked heterodimers. In terms of tissue distribution, expressed in rod photoreceptors in the retina (at protein level).

Its subcellular location is the photoreceptor inner segment. The protein resides in the cell projection. It localises to the cilium. The protein localises to the photoreceptor outer segment. It is found in the photoreceptor outer segment membrane. Its subcellular location is the perikaryon. In terms of biological role, acts as a calcium sensor and regulates phototransduction of cone and rod photoreceptor cells. Modulates light sensitivity of cone photoreceptor in dark and dim conditions. In response to high Ca(2+) levels induced by low light levels, prolongs RHO/rhodopsin activation in rod photoreceptor cells by binding to and inhibiting GRK1-mediated phosphorylation of RHO/rhodopsin. Plays a role in scotopic vision/enhances vision in dim light by enhancing signal transfer between rod photoreceptors and rod bipolar cells. Improves rod photoreceptor sensitivity in dim light and mediates response of rod photoreceptors to facilitate detection of change and motion in bright light. The chain is Recoverin (Rcvrn) from Mus musculus (Mouse).